We begin with the raw amino-acid sequence, 154 residues long: Host transcription reprogramming factor 5 (154 aa).

Residues 1–19 (MQILRIAQLMALLATCASA) form the signal peptide. The segment at 24–85 (TGSRVYSRDV…KRIKAEQNAR (62 aa)) is disordered. Polar residues predominate over residues 35–50 (QTQGGFSGSPTTNSPD). The span at 69–85 (ETEKERKKRIKAEQNAR) shows a compositional bias: basic and acidic residues. The segment at 96-121 (YQCPYCSDPTVFSHSDALGRHIYTIH) adopts a C2H2-type; degenerate zinc-finger fold.

The protein resides in the secreted. The protein localises to the host nucleus. In terms of biological role, probable secreted effector that translocates into the nuclei of host cells to reprogram the expression of targeted genes by binding on effector binding elements in rice. The protein is Host transcription reprogramming factor 5 of Pyricularia oryzae (strain 70-15 / ATCC MYA-4617 / FGSC 8958) (Rice blast fungus).